The sequence spans 327 residues: Putative pumilio homolog 19 (327 aa).

One can recognise a PUM-HD domain in the interval methionine 1–arginine 324. Pumilio repeat units lie at residues serine 79 to alanine 114, isoleucine 115 to glutamate 149, arginine 150 to leucine 185, glutamate 186 to valine 222, asparagine 223 to glycine 260, and cysteine 261 to tryptophan 295.

The protein localises to the cytoplasm. Functionally, sequence-specific RNA-binding protein that regulates translation and mRNA stability by binding the 3'-UTR of target mRNAs. This chain is Putative pumilio homolog 19 (APUM19), found in Arabidopsis thaliana (Mouse-ear cress).